A 374-amino-acid polypeptide reads, in one-letter code: DNA replication and repair protein RecF (374 aa).

30-37 (GNNAQGKS) provides a ligand contact to ATP.

The protein belongs to the RecF family.

The protein resides in the cytoplasm. Its function is as follows. The RecF protein is involved in DNA metabolism; it is required for DNA replication and normal SOS inducibility. RecF binds preferentially to single-stranded, linear DNA. It also seems to bind ATP. The polypeptide is DNA replication and repair protein RecF (Nostoc punctiforme (strain ATCC 29133 / PCC 73102)).